A 105-amino-acid chain; its full sequence is Small ribosomal subunit protein uS10 (105 aa).

The protein belongs to the universal ribosomal protein uS10 family. Part of the 30S ribosomal subunit.

Functionally, involved in the binding of tRNA to the ribosomes. The sequence is that of Small ribosomal subunit protein uS10 from Francisella philomiragia subsp. philomiragia (strain ATCC 25017 / CCUG 19701 / FSC 153 / O#319-036).